The chain runs to 176 residues: Probable inosine/xanthosine triphosphatase (176 aa).

Aspartate 36 contributes to the Mg(2+) binding site.

It belongs to the YjjX NTPase family. As to quaternary structure, homodimer. Mg(2+) serves as cofactor. Requires Mn(2+) as cofactor.

The catalysed reaction is XTP + H2O = XDP + phosphate + H(+). It carries out the reaction ITP + H2O = IDP + phosphate + H(+). Its function is as follows. Phosphatase that hydrolyzes non-canonical purine nucleotides such as XTP and ITP to their respective diphosphate derivatives. Probably excludes non-canonical purines from DNA/RNA precursor pool, thus preventing their incorporation into DNA/RNA and avoiding chromosomal lesions. The protein is Probable inosine/xanthosine triphosphatase of Saccharolobus islandicus (strain Y.G.57.14 / Yellowstone #1) (Sulfolobus islandicus).